We begin with the raw amino-acid sequence, 734 residues long: Sulfate transporter (734 aa).

Residues 1 to 11 (MSLKNGEQNDL) are compositionally biased toward polar residues. The disordered stretch occupies residues 1 to 38 (MSLKNGEQNDLSPKDSVKGNDQYRSPSGIHVEHEEESR). Phosphoserine occurs at positions 12 and 16. The next 2 helical transmembrane spans lie at 113–133 (MMSGLIVGILLVPQSIAYSLL) and 138–158 (PIYGLYTSFFASLIYFILGTS). N-linked (GlcNAc...) asparagine glycosylation is found at Asn194 and Asn204. The next 8 helical transmembrane spans lie at 222–242 (FVAGVYQVAMGFFQVGFVSVY), 247–267 (LLGGFVTGASFTILTSQVKYL), 269–289 (GLSLPRSGGVGSLITTWIHIF), 292–312 (IHKTNICDLITSLLCLLVLLP), 379–399 (VDAIAIAIIGFAITVSLSEMF), 415–435 (AIGFCNIIPSFFHSFTTSAAL), 453–473 (VMTALVLLLVLLVIAPLFFSL), and 519–539 (LISTEIGLLTGVCFSMFCVIL). One can recognise an STAS domain in the interval 563–714 (AYKNLQAKSG…YSVYEAMTFA (152 aa)).

The protein belongs to the SLC26A/SulP transporter (TC 2.A.53) family. Post-translationally, N-glycosylated.

It is found in the cell membrane. The protein localises to the apical cell membrane. It carries out the reaction oxalate(in) + sulfate(out) = oxalate(out) + sulfate(in). The enzyme catalyses sulfate(out) + 2 chloride(in) = sulfate(in) + 2 chloride(out). The catalysed reaction is oxalate(out) + 2 chloride(in) = oxalate(in) + 2 chloride(out). It catalyses the reaction bromide(in) + chloride(out) = bromide(out) + chloride(in). It carries out the reaction nitrate(in) + chloride(out) = nitrate(out) + chloride(in). The enzyme catalyses iodide(in) + chloride(out) = iodide(out) + chloride(in). Sulfate transporter which mediates sulfate uptake into chondrocytes in order to maintain adequate sulfation of proteoglycans which is needed for cartilage development. Mediates electroneutral anion exchange of sulfate ions for oxalate ions, sulfate and oxalate ions for chloride and/or hydroxyl ions and chloride ions for bromide, iodide and nitrate ions. The coupling of sulfate transport to both hydroxyl and chloride ions likely serves to ensure transport at both acidic pH when most sulfate uptake is mediated by sulfate-hydroxide exchange and alkaline pH when most sulfate uptake is mediated by sulfate-chloride exchange. Essential for chondrocyte proliferation, differentiation and cell size expansion. This chain is Sulfate transporter (SLC26A2), found in Ovis aries (Sheep).